Reading from the N-terminus, the 207-residue chain is Oligoribonuclease (207 aa).

Residues 20–183 (LVWLDMEMTG…ADIHESIDEL (164 aa)) form the Exonuclease domain. Residue Tyr-141 is part of the active site.

The protein belongs to the oligoribonuclease family.

It is found in the cytoplasm. In terms of biological role, 3'-to-5' exoribonuclease specific for small oligoribonucleotides. The polypeptide is Oligoribonuclease (Paraburkholderia xenovorans (strain LB400)).